Here is a 351-residue protein sequence, read N- to C-terminus: Transmembrane protein 185-like (351 aa).

Transmembrane regions (helical) follow at residues 16 to 36 (LIYA…DGII), 41 to 61 (WAVF…ASVG), 81 to 101 (FKAM…EVLV), 113 to 133 (WLLV…ACVW), 154 to 174 (FIFI…VVCV), 178 to 198 (ILMS…VLFL), 212 to 232 (ITMA…EILL), and 244 to 264 (YVPV…TTFG).

Belongs to the TMEM185 family.

Its subcellular location is the membrane. The chain is Transmembrane protein 185-like from Danio rerio (Zebrafish).